The chain runs to 1340 residues: MPEGARGLSLPKPSLRLGCGHQGEVCDCAAVSDTPTAQAATTMASPRGSGSSTSLSTVGSEGDPSPACSASRPEPLPEPPIRLHLLPVGIQGSVKPSRLERVAREIVETERAYVRDLRSIVEDYLGPLMDGRALGLNMEQVGTLFANIEDIYEFSSELLEDLEGCSSAGGIAECFVQRSEDFDIYTLYCMNYPSSLALLRELSVSPPATLWLQERQAQLRHSLPLQSFLLKPVQRILKYHLLLQELGKHWAEGPDSGGREMVEEAIVSMTAVAWYINDMKRKQEHAARLQEVQRRLGGWTGPELSAFGELVLEGTFRGGGGGGPRLRGGERLLFLFSRMLLVAKRRGPEYTYKGHIFCCNLSVSETPRDPLGFKVSDLTIPKHRHLFQAKNQEEKRLWIHCLQRLFFENHPASIPAKAKQVLLENSLHCAPKSKHIPEPPTSPLDSPRPRDAPGFTPGRRNPAPSPRLSGSRRGRRQSEPAKEAYVIFPQNDKPQVKHAGSEGELHPSSELQPVSASGLPEDLEDAGPPTLDPSGTSITEEILELLNQRGLRDSGPATHDIPKFPRDSRVPVESEPLPFQSLPSRESSEEEEEEDLETDEREPSPLHVLEGLEGSSAAEIPCIPSLTDIPSEVPSLPEIPEAPCLPCLSDISGVFEVPCLSPTSTVPDIPSLATTPSFPCGSWLPGPLQEAAQPQATRRELLSGSNPGRLSESPSESREGQEDDTEGVSFSAVQREAGTSVQGFPEELEYRSCSEIRSAWQALEQGQLARPGFPEPLLILEDSDLRGGSTSGKTGMPHSERSASRVRELARLYSERIQQMQRAETRASTNAPRRRPRVLAQPQPSPCPPQEEAEPGALPAFGHVLVCELAFPLNCTQESVPLGPAVLVQAATPLCIQGDDLSGQNLNVSDLSKQGHLSSNSIPPPVPLPGQSNFQNIQVPSTSLLPKQEPPDVQVPTASTLPDTSQLQSQVPAATPSAGHRNCVEIQVQSTTSLPGQECQADTVALSKQEGHEDSQNPNKAPGAEQRDVSIDQGLAVVGGRPVSPLPVCTSSPDQQIPATTPLPLSTDFPDMEGPGALPLPTQEGRPDCSIPCNPLPSLSQDVQVPAVIPVSQLQGLTDTRATVPLSSHKQEDAPECLGPEPSLTDTPAPRLLSSLGQQNTTDGPVSAAAVPLTEQGCSQDLQGLITSPVQTTMELPKPRGLVSRVATSESLDLTPPHSPSLSTRQLLGPSAAALSRYLAASYISQSLARRQGPGGEGTVASQGHWSSSAPTSRAPSPPPQPQPPAPPARRLSYATTVSIQVGGGGRLRPAKAQVRLNHPALLAAPHPGAVGPSQGPGGS.

Residues 34-44 show a composition bias toward polar residues; sequence TPTAQAATTMA. The segment at 34–76 is disordered; sequence TPTAQAATTMASPRGSGSSTSLSTVGSEGDPSPACSASRPEPL. A compositionally biased stretch (low complexity) spans 45–62; sequence SPRGSGSSTSLSTVGSEG. The 182-residue stretch at 98–279 folds into the DH domain; the sequence is RLERVAREIV…TAVAWYINDM (182 aa). In terms of domain architecture, PH spans 309 to 407; sequence ELVLEGTFRG…WIHCLQRLFF (99 aa). Disordered stretches follow at residues 431–623, 684–743, 820–855, 907–979, 991–1028, 1047–1069, and 1125–1146; these read PKSK…IPCI, LPGP…SVQG, MQRA…EAEP, NVSD…PSAG, TTSL…EQRD, PVCT…STDF, and PLSS…SLTD. Phosphothreonine is present on Thr441. 2 positions are modified to phosphoserine: Ser446 and Ser465. A compositionally biased stretch (basic and acidic residues) spans 560-572; sequence DIPKFPRDSRVPV. A compositionally biased stretch (acidic residues) spans 588-600; it reads SEEEEEEDLETDE. Composition is skewed to polar residues over residues 703–714, 820–831, 907–921, 930–945, and 956–972; these read SGSNPGRLSESP, MQRAETRASTNA, NVSD…SSNS, GQSN…TSLL, and PTAS…SQVP. Residues 1049 to 1059 show a composition bias toward polar residues; that stretch reads CTSSPDQQIPA. Thr1215 bears the Phosphothreonine mark. Residues Ser1219 and Ser1269 each carry the phosphoserine modification. Residues 1250–1340 are disordered; it reads RRQGPGGEGT…VGPSQGPGGS (91 aa). Residues 1276–1288 are compositionally biased toward pro residues; that stretch reads PSPPPQPQPPAPP. Over residues 1319–1333 the composition is skewed to low complexity; it reads HPALLAAPHPGAVGP.

In terms of tissue distribution, expressed in thymus, skeletal muscle, lung, testis, uterus, pancreas and heart and also expressed during embryogenesis.

May be a transforming oncogene with exchange activity for CDC42. May be a guanine-nucleotide exchange factor (GEF) for RAC1 and CDC42. Activated by the binding to subunits beta and gamma of the heterotrimeric guanine nucleotide-binding protein (G protein). Involved in the regulation of actin polymerization. The chain is Pleckstrin homology domain-containing family G member 2 (Plekhg2) from Mus musculus (Mouse).